Consider the following 168-residue polypeptide: Crossover junction endodeoxyribonuclease RuvC (168 aa).

Catalysis depends on residues D9, E70, and D145. Residues D9, E70, and D145 each contribute to the Mg(2+) site.

This sequence belongs to the RuvC family. As to quaternary structure, homodimer which binds Holliday junction (HJ) DNA. The HJ becomes 2-fold symmetrical on binding to RuvC with unstacked arms; it has a different conformation from HJ DNA in complex with RuvA. In the full resolvosome a probable DNA-RuvA(4)-RuvB(12)-RuvC(2) complex forms which resolves the HJ. It depends on Mg(2+) as a cofactor.

It is found in the cytoplasm. It carries out the reaction Endonucleolytic cleavage at a junction such as a reciprocal single-stranded crossover between two homologous DNA duplexes (Holliday junction).. Functionally, the RuvA-RuvB-RuvC complex processes Holliday junction (HJ) DNA during genetic recombination and DNA repair. Endonuclease that resolves HJ intermediates. Cleaves cruciform DNA by making single-stranded nicks across the HJ at symmetrical positions within the homologous arms, yielding a 5'-phosphate and a 3'-hydroxyl group; requires a central core of homology in the junction. The consensus cleavage sequence is 5'-(A/T)TT(C/G)-3'. Cleavage occurs on the 3'-side of the TT dinucleotide at the point of strand exchange. HJ branch migration catalyzed by RuvA-RuvB allows RuvC to scan DNA until it finds its consensus sequence, where it cleaves and resolves the cruciform DNA. This is Crossover junction endodeoxyribonuclease RuvC from Chlamydia pneumoniae (Chlamydophila pneumoniae).